Consider the following 413-residue polypeptide: RNA-binding protein 41 (413 aa).

The span at 223 to 235 (SVGDSGTAESPSL) shows a compositional bias: polar residues. The segment at 223 to 247 (SVGDSGTAESPSLLQDKGKQAAQGK) is disordered. Ser232 is modified (phosphoserine). Residues 309 to 387 (KVLYLKNLSP…KILVIEFGKN (79 aa)) enclose the RRM domain.

Functionally, may bind RNA. This chain is RNA-binding protein 41 (RBM41), found in Homo sapiens (Human).